Reading from the N-terminus, the 118-residue chain is Thioredoxin-like protein CXXS1 (118 aa).

A Thioredoxin domain is found at 2–110 (ARVVKIDSAE…IKKRVDGFVQ (109 aa)).

Belongs to the thioredoxin family. Ubiquitous.

It is found in the cytoplasm. Its function is as follows. Possesses low disulfide reductase activity, but efficient protein disulfide isomerase activity. Does not possess deglutathionylation activity. This is Thioredoxin-like protein CXXS1 (CXXS1) from Arabidopsis thaliana (Mouse-ear cress).